The following is a 352-amino-acid chain: Putative hetero-Diels-Alderase (352 aa).

Positions Met1 to Thr20 are cleaved as a signal peptide. N-linked (GlcNAc...) asparagine glycosylation is found at Asn26, Asn41, Asn47, Asn135, Asn211, and Asn310.

It belongs to the eupF Diels-Alderase family.

Its pathway is secondary metabolite biosynthesis; terpenoid biosynthesis. Putative hetero-Diels-Alderase; part of the gene cluster that mediates the biosynthesis of eupenifeldin, a bistropolone meroterpenoid that acts as an antitumor agent. The first step of eupenifeldin biosynthesis is the biosynthesis of 3-methylorcinaldehyde performed by the non-reducing polyketide synthase eupA. Oxidative dearomatization of 3-methylorcinaldehyde likely catalyzed by the FAD-dependent monooxygenase eupB is followed by oxidative ring expansion by the 2-oxoglutarate-dependent dioxygenase eupC to provide the first tropolone metabolite, tropolone stipitaldehyde. In parallel, generation of sesquiterpene alpha-humulene from farnesylpyrophosphate (FPP) is catalyzed by the terpene cyclase eupE. The cytochrome P450 monooxygenase eupD then hydroxylates humulene to humulenol. The putative Diels-Alderase eupF probably catalyzes the formation of the tropolone-humulene skeleton by linking humulenol and the polyketide moiety. The short-chain dehydrogenase/reductase eupG and the flavin-dependent monooxygenase eupH are also essential for eupenifeldin biosynthesis and are likely the additional decorating enzymes of the tropolone-humulene skeleton to produce final eupenifeldin or derivatives. The protein is Putative hetero-Diels-Alderase of Phoma sp.